Consider the following 351-residue polypeptide: Mitochondrial mRNA pseudouridine synthase RPUSD3 (351 aa).

The transit peptide at 1 to 25 (MRAVLAREMDGRRVLGRFWSGWRRG) directs the protein to the mitochondrion. The tract at residues 33–58 (EDAGFGTEARHQRQPRGSCQRSGPLG) is disordered. At serine 71 the chain carries Phosphoserine.

This sequence belongs to the pseudouridine synthase RluA family. Forms a regulatory protein-RNA complex, consisting of RCC1L, NGRN, RPUSD3, RPUSD4, TRUB2, FASTKD2 and 16S mt-rRNA.

It is found in the mitochondrion matrix. It carries out the reaction a uridine in mRNA = a pseudouridine in mRNA. In terms of biological role, catalyzes uridine to pseudouridine isomerization (pseudouridylation) of specific mitochondrial mRNAs (mt-mRNAs), a post-transcriptional modification necessary for their translation. Acts at position 390 in COXI mt-mRNA and at position 697-699 in mitochondrial COXIII mt-mRNA. As a component of a functional protein-RNA module, consisting of RCC1L, NGRN, RPUSD3, RPUSD4, TRUB2, FASTKD2 and 16S mitochondrial ribosomal RNA (16S mt-rRNA), controls 16S mt-rRNA abundance and may play a role in mitochondrial ribosome biogenesis. The chain is Mitochondrial mRNA pseudouridine synthase RPUSD3 from Homo sapiens (Human).